We begin with the raw amino-acid sequence, 101 residues long: Urease subunit beta (101 aa).

Belongs to the urease beta subunit family. Heterotrimer of UreA (gamma), UreB (beta) and UreC (alpha) subunits. Three heterotrimers associate to form the active enzyme.

The protein localises to the cytoplasm. The enzyme catalyses urea + 2 H2O + H(+) = hydrogencarbonate + 2 NH4(+). The protein operates within nitrogen metabolism; urea degradation; CO(2) and NH(3) from urea (urease route): step 1/1. This chain is Urease subunit beta, found in Agrobacterium fabrum (strain C58 / ATCC 33970) (Agrobacterium tumefaciens (strain C58)).